The primary structure comprises 329 residues: uncharacterized protein (329 aa).

10 helical membrane-spanning segments follow: residues 9–29, 53–73, 105–125, 126–146, 154–174, 179–199, 210–230, 240–260, 273–293, and 296–316; these read LMGL…NVIV, SHSF…MALI, FLMF…PTGI, AITL…RLFN, WLVI…AYGG, LVLG…YTVF, VPFT…CLII, WLAI…GHVL, AAII…LAIQ, and LTNI…LLNY. EamA domains are found at residues 103–169 and 191–316; these read CGFL…LTIP and IVYA…LLNY.

Belongs to the EamA transporter family.

The protein resides in the cell membrane. This is an uncharacterized protein from Synechocystis sp. (strain ATCC 27184 / PCC 6803 / Kazusa).